The primary structure comprises 113 residues: Transcription initiation factor IIA subunit 2 (113 aa).

The protein belongs to the TFIIA subunit 2 family. TFIIA is a heterodimer of the large unprocessed subunit 1 and a small subunit gamma. It was originally believed to be a heterotrimer of an alpha, a beta and a gamma subunit.

Its subcellular location is the nucleus. Its function is as follows. TFIIA is a component of the transcription machinery of RNA polymerase II and plays an important role in transcriptional activation. TFIIA in a complex with TBP mediates transcriptional activity. The polypeptide is Transcription initiation factor IIA subunit 2 (Caenorhabditis elegans).